The chain runs to 490 residues: GTPase Der (490 aa).

EngA-type G domains follow at residues 3–166 (PVVA…MDDV) and 203–376 (IKLA…DSST). Residues 9 to 16 (GRPNVGKS), 56 to 60 (DTGGI), 118 to 121 (NKTD), 209 to 216 (GRPNVGKS), 256 to 260 (DTAGV), and 321 to 324 (NKWD) contribute to the GTP site. The KH-like domain maps to 377-461 (RRVSTAMLTR…PIRIQFKEGE (85 aa)).

It belongs to the TRAFAC class TrmE-Era-EngA-EngB-Septin-like GTPase superfamily. EngA (Der) GTPase family. As to quaternary structure, associates with the 50S ribosomal subunit.

In terms of biological role, GTPase that plays an essential role in the late steps of ribosome biogenesis. This Salmonella typhi protein is GTPase Der.